Here is a 291-residue protein sequence, read N- to C-terminus: Putative transport permease ycf38 (291 aa).

6 helical membrane passes run 47-67 (ATLMAGIIQPLLWLVLFGGLF), 87-107 (SGIIVFTSFTGALNSGLPLMF), 135-155 (FMTCLSLIQVIFIVIASLFMG), 165-185 (LIFALIVLLVTVGVTMLSLAL), 195-215 (LLALILVVNLPFLFSSTALAP), and 262-282 (ISLGQIISLLLFLDVIGAYIV). An ABC transmembrane type-2 domain is found at 47 to 289 (ATLMAGIIQP…YIVSNILKAR (243 aa)).

The protein belongs to the ABC-2 integral membrane protein family.

The protein resides in the plastid. It is found in the chloroplast membrane. This Porphyra purpurea (Red seaweed) protein is Putative transport permease ycf38 (ycf38).